We begin with the raw amino-acid sequence, 4592 residues long: Intermembrane lipid transfer protein vps13D (4592 aa).

Positions 3 to 102 (FESVVAEVID…SSTNVSSNYS (100 aa)) constitute a Chorein N-terminal domain. Disordered regions lie at residues 95 to 142 (TNVS…TASQ), 157 to 199 (LDKK…IDSQ), 286 to 307 (STTS…SSSS), 445 to 529 (KKDD…IKGI), 574 to 605 (SNST…LSPM), 826 to 861 (NYNN…QQGI), 1040 to 1083 (TTSP…KRQW), 1219 to 1249 (YFKN…EKKP), 1655 to 1717 (QQQE…QQSN), 1855 to 1886 (SNNN…NSLF), 1971 to 2001 (TSSL…TTTS), 2025 to 2056 (PLIN…EQQQ), and 2245 to 2270 (NNNN…NIIN). 2 stretches are compositionally biased toward low complexity: residues 117–139 (SSSN…TTST) and 172–199 (KSTN…IDSQ). Residues 437 to 517 (KNATIKLNKK…KKKEEKGKSK (81 aa)) are a coiled coil. Residues 445-457 (KKDDKKDDKKDDI) show a composition bias toward basic and acidic residues. Low complexity predominate over residues 458–474 (NSSSSSIGSSNSSNNTP). Residues 475–529 (TKDKNKEKEKDKEKEKEKEKKKEKEKLKLEEKKKKKEEKGKSKSKDSKKNKIKGI) show a composition bias toward basic and acidic residues. The span at 574–591 (SNSTTTNNSNNNSSSSPN) shows a compositional bias: low complexity. The segment covering 592–603 (ILATSPSNNSLS) has biased composition (polar residues). The span at 829–838 (NQSSSSSSSS) shows a compositional bias: low complexity. Residues 1040–1059 (TTSPTFNSLNNKPSTLQNNH) are compositionally biased toward polar residues. A compositionally biased stretch (low complexity) spans 1064–1076 (NGNSSNNNNTDSP). Residues 1234–1244 (NTEDDEQEEEE) are compositionally biased toward acidic residues. Low complexity-rich tracts occupy residues 1669-1689 (KSIN…LRKS) and 1702-1715 (QQQQ…QQQQ). Positions 2037 to 2048 (SKSSSSKSSSSK) are enriched in low complexity. The TPR 1 repeat unit spans residues 2321–2354 (TLQINDLGANIISIGNKSTSIKCFLRSIRLSDSR). 7 disordered regions span residues 2456 to 2489 (KTNN…SIST), 2862 to 2882 (AVST…NNNG), 3006 to 3035 (GEQK…SSSS), 3106 to 3129 (NSSG…SSSN), 3356 to 3384 (KLPT…KRTT), 3560 to 3580 (NSLK…HRHN), and 3630 to 3679 (STNH…SKLK). Low complexity-rich tracts occupy residues 2458–2478 (NNNN…NNNN), 2864–2880 (STSN…SNNN), and 3015–3035 (TSTS…SSSS). A compositionally biased stretch (low complexity) spans 3358-3384 (PTSPQTSSSSSPPPATTTTSTTTKRTT). Over residues 3569-3580 (KSKKQQQQHRHN) the composition is skewed to basic residues. Over residues 3640 to 3679 (SSTFNNSSNDNINNGNSNNNTSNSLSPPSSSSSINLSKLK) the composition is skewed to low complexity. The TPR 2 repeat unit spans residues 3789–3822 (EVPKPYLGRVDIKDNDTHTSIHFYDQDTEYSPFR). Composition is skewed to low complexity over residues 3872–3894 (TTTT…NNNN) and 4111–4135 (QQLQ…NPIN). Disordered regions lie at residues 3872 to 3897 (TTTT…NQYI) and 4105 to 4135 (KKHK…NPIN).

The protein resides in the membrane. Functionally, mediates the transfer of lipids between membranes at organelle contact sites. This Dictyostelium discoideum (Social amoeba) protein is Intermembrane lipid transfer protein vps13D (vps13D).